Reading from the N-terminus, the 129-residue chain is Arsenate-mycothiol transferase ArsC2 (129 aa).

It belongs to the low molecular weight phosphotyrosine protein phosphatase family.

The protein resides in the cytoplasm. The enzyme catalyses mycothiol + arsenate = arseno-mycothiol + H2O. Involved in defense against toxic arsenate. Involved in the mycothiol/myoredoxin redox pathway which uses a mycothioltransferase mechanism; facilitates adduct formation between arsenate and mycothiol. The chain is Arsenate-mycothiol transferase ArsC2 (arsC2) from Corynebacterium glutamicum (strain ATCC 13032 / K051).